Reading from the N-terminus, the 488-residue chain is Protein nucleotidyltransferase YdiU (488 aa).

The ATP site is built by G91, G93, R94, K114, D126, G127, R177, and R184. D253 serves as the catalytic Proton acceptor. The Mg(2+) site is built by N254 and D263. D263 serves as a coordination point for ATP.

This sequence belongs to the SELO family. It depends on Mg(2+) as a cofactor. Requires Mn(2+) as cofactor.

The enzyme catalyses L-seryl-[protein] + ATP = 3-O-(5'-adenylyl)-L-seryl-[protein] + diphosphate. It carries out the reaction L-threonyl-[protein] + ATP = 3-O-(5'-adenylyl)-L-threonyl-[protein] + diphosphate. It catalyses the reaction L-tyrosyl-[protein] + ATP = O-(5'-adenylyl)-L-tyrosyl-[protein] + diphosphate. The catalysed reaction is L-histidyl-[protein] + UTP = N(tele)-(5'-uridylyl)-L-histidyl-[protein] + diphosphate. The enzyme catalyses L-seryl-[protein] + UTP = O-(5'-uridylyl)-L-seryl-[protein] + diphosphate. It carries out the reaction L-tyrosyl-[protein] + UTP = O-(5'-uridylyl)-L-tyrosyl-[protein] + diphosphate. Its function is as follows. Nucleotidyltransferase involved in the post-translational modification of proteins. It can catalyze the addition of adenosine monophosphate (AMP) or uridine monophosphate (UMP) to a protein, resulting in modifications known as AMPylation and UMPylation. The protein is Protein nucleotidyltransferase YdiU of Bacillus thuringiensis (strain Al Hakam).